Consider the following 37-residue polypeptide: MKVRASVKSICKDCKVIRRNGSVRVICKNPRHKQRQG.

This sequence belongs to the bacterial ribosomal protein bL36 family.

The chain is Large ribosomal subunit protein bL36 from Magnetococcus marinus (strain ATCC BAA-1437 / JCM 17883 / MC-1).